A 396-amino-acid polypeptide reads, in one-letter code: Putative F-box/kelch-repeat protein At4g11770 (396 aa).

The region spanning 9–55 (PCNMPYLPDDLLLNILGRVSRLYYPILSLVSKRFRSLVGSLELYKIR) is the F-box domain. 3 Kelch repeats span residues 151 to 197 (YIYM…VLDG), 198 to 248 (KIYV…YEEK), and 250 to 296 (YLFG…VFYK).

The chain is Putative F-box/kelch-repeat protein At4g11770 from Arabidopsis thaliana (Mouse-ear cress).